Here is a 469-residue protein sequence, read N- to C-terminus: Sulfate adenylyltransferase subunit 1 (469 aa).

The 216-residue stretch at 22 to 237 (KEVLRFITCG…LEEVPVKSEE (216 aa)) folds into the tr-type G domain. Residues 31–38 (GSVDDGKS) form a G1 region. 31-38 (GSVDDGKS) serves as a coordination point for GTP. The G2 stretch occupies residues 89-93 (GITID). The segment at 110 to 113 (DTPG) is G3. GTP-binding positions include 110 to 114 (DTPGH) and 165 to 168 (NKMD). The tract at residues 165–168 (NKMD) is G4. The tract at residues 202 to 204 (SAK) is G5.

This sequence belongs to the TRAFAC class translation factor GTPase superfamily. Classic translation factor GTPase family. CysN/NodQ subfamily. In terms of assembly, heterodimer composed of CysD, the smaller subunit, and CysN.

The enzyme catalyses sulfate + ATP + H(+) = adenosine 5'-phosphosulfate + diphosphate. It participates in sulfur metabolism; hydrogen sulfide biosynthesis; sulfite from sulfate: step 1/3. Functionally, with CysD forms the ATP sulfurylase (ATPS) that catalyzes the adenylation of sulfate producing adenosine 5'-phosphosulfate (APS) and diphosphate, the first enzymatic step in sulfur assimilation pathway. APS synthesis involves the formation of a high-energy phosphoric-sulfuric acid anhydride bond driven by GTP hydrolysis by CysN coupled to ATP hydrolysis by CysD. The chain is Sulfate adenylyltransferase subunit 1 from Methylorubrum extorquens (strain PA1) (Methylobacterium extorquens).